The following is a 781-amino-acid chain: Poly(ADP-ribose) glycohydrolase 1 (781 aa).

Disordered stretches follow at residues 28 to 87 (AHQV…VSEN), 102 to 131 (SLDN…NNKS), and 206 to 232 (ADST…DADS). A compositionally biased stretch (basic and acidic residues) spans 106 to 121 (VTERSEHTLDNHKSTE).

The protein belongs to the poly(ADP-ribose) glycohydrolase family. Expressed in head and tail neurons. Also detected in the central nerve cord and motor neurons.

It localises to the nucleus. The enzyme catalyses [(1''-&gt;2')-ADP-alpha-D-ribose](n) + H2O = [(1''-&gt;2')-ADP-alpha-D-ribose](n-1) + ADP-D-ribose. In terms of biological role, poly(ADP-ribose) synthesized after DNA damage is only present transiently and is rapidly degraded by poly(ADP-ribose) glycohydrolase. Poly(ADP-ribose) metabolism may be required for maintenance of the normal function of neuronal cells. The polypeptide is Poly(ADP-ribose) glycohydrolase 1 (Caenorhabditis elegans).